We begin with the raw amino-acid sequence, 374 residues long: F-box/LRR-repeat protein 8 (374 aa).

The F-box domain maps to 2–48 (GELVDNLPEEVLALIFRDLPLRDLAVATRVCRAWAAAAANSTVWSDK).

As to quaternary structure, directly interacts with SKP1 and CUL1. As to expression, widely expressed during embryogenesis and in adult tissues.

Substrate-recognition component of the SCF (SKP1-CUL1-F-box protein)-type E3 ubiquitin ligase complex. This Mus musculus (Mouse) protein is F-box/LRR-repeat protein 8 (Fbxl8).